The chain runs to 244 residues: CTD nuclear envelope phosphatase 1 (244 aa).

The helical transmembrane segment at 7–29 (LLGLRTFVAFAAKLWSFFIYLLR) threads the bilayer. Residues 57–224 (AQVKRKILVL…LNLLPMLDAL (168 aa)) enclose the FCP1 homology domain.

Belongs to the dullard family. Interacts with CNEP1R1; the complex dephosphorylates LPIN1 and LPIN2. As to expression, muscle specific with lower expression in other metabolic tissues.

The protein resides in the endoplasmic reticulum membrane. It localises to the nucleus membrane. The enzyme catalyses O-phospho-L-seryl-[protein] + H2O = L-seryl-[protein] + phosphate. It carries out the reaction O-phospho-L-threonyl-[protein] + H2O = L-threonyl-[protein] + phosphate. Serine/threonine protein phosphatase forming with CNEP1R1 an active phosphatase complex that dephosphorylates and may activate LPIN1 and LPIN2. LPIN1 and LPIN2 are phosphatidate phosphatases that catalyze the conversion of phosphatidic acid to diacylglycerol and control the metabolism of fatty acids at different levels. May indirectly modulate the lipid composition of nuclear and/or endoplasmic reticulum membranes and be required for proper nuclear membrane morphology and/or dynamics. May also indirectly regulate the production of lipid droplets and triacylglycerol. May antagonize BMP signaling. The protein is CTD nuclear envelope phosphatase 1 (Ctdnep1) of Mus musculus (Mouse).